Here is a 67-residue protein sequence, read N- to C-terminus: MMSKLGVLLTICLLLFPLTVLPMDGDQPADLPALRTQDIATDQSPWFDPVKRCCSRYCWKCIPCCPY.

An N-terminal signal peptide occupies residues M1–P22. Positions M23–V50 are excised as a propeptide. 3 cysteine pairs are disulfide-bonded: C53/C65, C54/C61, and C58/C64. 4-hydroxyproline is present on P63.

Belongs to the conotoxin M superfamily. Expressed by the venom duct.

It localises to the secreted. In Conus tessulatus (Tessellate cone), this protein is Conotoxin TsMMSK-011.